We begin with the raw amino-acid sequence, 202 residues long: Coiled-coil domain-containing protein 85B (202 aa).

At Met1 the chain carries N-acetylmethionine. 2 coiled-coil regions span residues 43–90 (GRLM…ERQR) and 118–147 (QKLA…LGEE). Residues 148–202 (WGPRGGPSGAGGSGAGPAPELALPPCGPRDLGDGSSSTGSVGSPDQLPLACSPDD) form a disordered region. Gly residues predominate over residues 150–162 (PRGGPSGAGGSGA). Residues 180-190 (DGSSSTGSVGS) are compositionally biased toward low complexity.

Belongs to the CCDC85 family. In terms of assembly, interacts with CEBPB. Interacts with EURL. May interact with CEBPD. Interacts with MCRS1. Interacts with TCF7L2; competes with CTNNB1. Interacts with ANKRD26. Interacts with the beta-catenin family proteins ARVCF, CTNND1, CTNND2 and PKP4. As to quaternary structure, (Microbial infection) Interacts with the viral phosphoprotein hepatitis delta antigen (HDAG); this interaction affects hepatitis delta virus (HDV) genomic replication in intact cells. As to expression, widely expressed including liver.

The protein resides in the nucleus. The protein localises to the cytoplasm. Its subcellular location is the cytoskeleton. It is found in the microtubule organizing center. It localises to the centrosome. The protein resides in the cell junction. The protein localises to the adherens junction. Functionally, functions as a transcriptional repressor. May inhibit the activity of CTNNB1 in a TP53-dependent manner and thus regulate cell growth. May function in adipocyte differentiation, negatively regulating mitotic clonal expansion. Plays a role in cell-cell adhesion and epithelium development through its interaction with proteins of the beta-catenin family. Its function is as follows. (Microbial infection) Plays a role in hepatitis delta virus (HDV) genomic replication. In Homo sapiens (Human), this protein is Coiled-coil domain-containing protein 85B (CCDC85B).